Reading from the N-terminus, the 198-residue chain is Peptidyl-tRNA hydrolase (198 aa).

A tRNA-binding site is contributed by Y16. H21 functions as the Proton acceptor in the catalytic mechanism. TRNA contacts are provided by Y67, N69, and N115.

The protein belongs to the PTH family. Monomer.

Its subcellular location is the cytoplasm. The catalysed reaction is an N-acyl-L-alpha-aminoacyl-tRNA + H2O = an N-acyl-L-amino acid + a tRNA + H(+). Its function is as follows. Hydrolyzes ribosome-free peptidyl-tRNAs (with 1 or more amino acids incorporated), which drop off the ribosome during protein synthesis, or as a result of ribosome stalling. In terms of biological role, catalyzes the release of premature peptidyl moieties from peptidyl-tRNA molecules trapped in stalled 50S ribosomal subunits, and thus maintains levels of free tRNAs and 50S ribosomes. In Gloeobacter violaceus (strain ATCC 29082 / PCC 7421), this protein is Peptidyl-tRNA hydrolase.